A 593-amino-acid polypeptide reads, in one-letter code: UvrABC system protein C (593 aa).

Residues 14–91 (DSPGCYLHKD…IQENMPKYNI (78 aa)) form the GIY-YIG domain. The UVR domain occupies 196 to 231 (NKIVNGLTEKMKSAAMTMEFERAAEYRDLIEAISLL).

The protein belongs to the UvrC family. In terms of assembly, interacts with UvrB in an incision complex.

The protein localises to the cytoplasm. Functionally, the UvrABC repair system catalyzes the recognition and processing of DNA lesions. UvrC both incises the 5' and 3' sides of the lesion. The N-terminal half is responsible for the 3' incision and the C-terminal half is responsible for the 5' incision. The polypeptide is UvrABC system protein C (Streptococcus agalactiae serotype Ia (strain ATCC 27591 / A909 / CDC SS700)).